A 138-amino-acid chain; its full sequence is Putative pre-16S rRNA nuclease (138 aa).

Belongs to the YqgF nuclease family.

It is found in the cytoplasm. In terms of biological role, could be a nuclease involved in processing of the 5'-end of pre-16S rRNA. The chain is Putative pre-16S rRNA nuclease from Helicobacter hepaticus (strain ATCC 51449 / 3B1).